Reading from the N-terminus, the 292-residue chain is 11-beta-hydroxysteroid dehydrogenase 1 (292 aa).

The Cytoplasmic portion of the chain corresponds to 1 to 7 (MAFMKKY). The chain crosses the membrane as a helical; Signal-anchor for type II membrane protein span at residues 8–24 (LLPILGIFLAYYYYSAN). Topologically, residues 25–292 (EEFRPEMLRG…KYNMERFINN (268 aa)) are lumenal. NADP(+) is bound by residues 41–67 (GASK…TARS) and 92–93 (TM). N-linked (GlcNAc...) asparagine glycosylation is present at N95. An NADP(+)-binding site is contributed by 119–121 (NHI). A substrate-binding site is contributed by S170. The active-site Proton acceptor is Y183. 183 to 187 (YSASK) lines the NADP(+) pocket. A glycan (N-linked (GlcNAc...) asparagine) is linked at N207. Residues 216–222 (GLIDTDT) and 218–222 (IDTDT) contribute to the NADP(+) site.

Belongs to the short-chain dehydrogenases/reductases (SDR) family. As to quaternary structure, homodimer. As to expression, liver, kidney, lung, hypothalamus, anterior pituitary and placenta.

It is found in the endoplasmic reticulum membrane. The catalysed reaction is an 11beta-hydroxysteroid + NADP(+) = an 11-oxosteroid + NADPH + H(+). It catalyses the reaction corticosterone + NADP(+) = 11-dehydrocorticosterone + NADPH + H(+). It carries out the reaction cortisone + NADPH + H(+) = cortisol + NADP(+). The enzyme catalyses a 7beta-hydroxysteroid + NADP(+) = a 7-oxosteroid + NADPH + H(+). The catalysed reaction is 7-oxocholesterol + NADPH + H(+) = 7beta-hydroxycholesterol + NADP(+). It catalyses the reaction chenodeoxycholate + NADP(+) = 7-oxolithocholate + NADPH + H(+). It carries out the reaction 7-oxolithocholate + NADPH + H(+) = ursodeoxycholate + NADP(+). The enzyme catalyses glycochenodeoxycholate + NADP(+) = 7-oxoglycolithocholate + NADPH + H(+). The catalysed reaction is taurochenodeoxycholate + NADP(+) = 7-oxotaurolithocholate + NADPH + H(+). It catalyses the reaction tauroursodeoxycholate + NADP(+) = 7-oxotaurolithocholate + NADPH + H(+). It carries out the reaction glycoursodeoxycholate + NADP(+) = 7-oxoglycolithocholate + NADPH + H(+). The enzyme catalyses 7-oxopregnenolone + NADPH + H(+) = 7beta-hydroxypregnenolone + NADP(+). The catalysed reaction is 3beta,7alpha-dihydroxyandrost-5-en-17-one + NADP(+) = 3beta-hydroxy-5-androstene-7,17-dione + NADPH + H(+). It catalyses the reaction 3beta-hydroxy-5-androstene-7,17-dione + NADPH + H(+) = 3beta,7beta-dihydroxyandrost-5-en-17-one + NADP(+). It carries out the reaction 3beta-hydroxy-5alpha-androstane-7,17-dione + NADPH + H(+) = 3beta,7beta-dihydroxy-5alpha-androstan-17-one + NADP(+). Functionally, controls the reversible conversion of biologically active glucocorticoids such as cortisone to cortisol, and 11-dehydrocorticosterone to corticosterone in the presence of NADP(H). Participates in the corticosteroid receptor-mediated anti-inflammatory response, as well as metabolic and homeostatic processes. Plays a role in the secretion of aqueous humor in the eye, maintaining a normotensive, intraocular environment. Bidirectional in vitro, predominantly functions as a reductase in vivo, thereby increasing the concentration of active glucocorticoids. It has broad substrate specificity, besides glucocorticoids, it accepts other steroid and sterol substrates. Interconverts 7-oxo- and 7-hydroxy-neurosteroids such as 7-oxopregnenolone and 7beta-hydroxypregnenolone, 7-oxodehydroepiandrosterone (3beta-hydroxy-5-androstene-7,17-dione) and 7beta-hydroxydehydroepiandrosterone (3beta,7beta-dihydroxyandrost-5-en-17-one), among others. Catalyzes the stereo-specific conversion of the major dietary oxysterol, 7-ketocholesterol (7-oxocholesterol), into the more polar 7-beta-hydroxycholesterol metabolite. 7-oxocholesterol is one of the most important oxysterols, it participates in several events such as induction of apoptosis, accumulation in atherosclerotic lesions, lipid peroxidation, and induction of foam cell formation. Mediates the 7-oxo reduction of 7-oxolithocholate mainly to chenodeoxycholate, and to a lesser extent to ursodeoxycholate, both in its free form and when conjugated to glycine or taurine, providing a link between glucocorticoid activation and bile acid metabolism. Catalyzes the synthesis of 7-beta-25-dihydroxycholesterol from 7-oxo-25-hydroxycholesterol in vitro, which acts as a ligand for the G-protein-coupled receptor (GPCR) Epstein-Barr virus-induced gene 2 (EBI2) and may thereby regulate immune cell migration. In Ovis aries (Sheep), this protein is 11-beta-hydroxysteroid dehydrogenase 1 (HSD11B1).